We begin with the raw amino-acid sequence, 337 residues long: ADP-ribosylation factor GTPase-activating protein AGD12 (337 aa).

The Arf-GAP domain maps to 15–137 (KRRIRDLLTQ…EFLKPSLRIT (123 aa)). The segment at 30–53 (CADCGAPDPKWASANIGVFICLKC) adopts a C4-type zinc-finger fold. In terms of domain architecture, C2 spans 164-281 (TNSSSQQPQL…AMAFGDPEMF (118 aa)). Ca(2+) is bound by residues Asp250, Ser253, and Asp256.

Requires Ca(2+) as cofactor. Expressed in roots, leaves, flowers and siliques. Low levels of expression in seeds and stems.

It is found in the golgi apparatus. It localises to the cell membrane. Functionally, GTPase-activating protein (GAP) for ADP ribosylation factor (ARF). Binds phosphatidylinositol 3-monophosohate (PI-3-P) and anionic phospholipids. This chain is ADP-ribosylation factor GTPase-activating protein AGD12 (AGD12), found in Arabidopsis thaliana (Mouse-ear cress).